Here is a 170-residue protein sequence, read N- to C-terminus: Zinc finger matrin-type protein 5 (170 aa).

The segment at 51-79 adopts a C3H1-type zinc-finger fold; the sequence is EQNKRPCRKFLLTGQCDFGSNCRFSHMSE. The interval 150–170 is disordered; the sequence is PPSLRAPPPGGWPLQPSVQWG.

Component of the U11/U12 snRNPs that are part of the U12-type spliceosome.

The protein resides in the nucleus. This chain is Zinc finger matrin-type protein 5 (ZMAT5), found in Bos taurus (Bovine).